A 206-amino-acid polypeptide reads, in one-letter code: Inner membrane-spanning protein YciB (206 aa).

5 helical membrane passes run 22 to 42 (IYTA…LTYF), 50 to 70 (MQVI…FLHD), 76 to 96 (WKVT…HIMG), 118 to 138 (INWA…YVAF), and 148 to 168 (FKVF…GVYI). A compositionally biased stretch (basic and acidic residues) spans 178–189 (LPKDKHQQRDQE). Residues 178–206 (LPKDKHQQRDQETQNDTQQELSGKNTEEK) form a disordered region. A compositionally biased stretch (polar residues) spans 191-206 (QNDTQQELSGKNTEEK).

This sequence belongs to the YciB family.

Its subcellular location is the cell inner membrane. Plays a role in cell envelope biogenesis, maintenance of cell envelope integrity and membrane homeostasis. This chain is Inner membrane-spanning protein YciB, found in Vibrio atlanticus (strain LGP32) (Vibrio splendidus (strain Mel32)).